The primary structure comprises 51 residues: Large ribosomal subunit protein eL39 (51 aa).

This sequence belongs to the eukaryotic ribosomal protein eL39 family.

The polypeptide is Large ribosomal subunit protein eL39 (Picrophilus torridus (strain ATCC 700027 / DSM 9790 / JCM 10055 / NBRC 100828 / KAW 2/3)).